The sequence spans 385 residues: tRNA N6-adenosine threonylcarbamoyltransferase (385 aa).

His140, His144, and Tyr161 together coordinate a divalent metal cation. Residues 161–165 (YVSGG), Asp193, Gly208, Glu212, and Asn314 each bind substrate. Residue Asp343 coordinates a divalent metal cation.

It belongs to the KAE1 / TsaD family. Component of the EKC/KEOPS complex composed of at least BUD32, CGI121, GON7, KAE1 and PCC1; the whole complex dimerizes. A divalent metal cation serves as cofactor.

The protein resides in the cytoplasm. The protein localises to the nucleus. The catalysed reaction is L-threonylcarbamoyladenylate + adenosine(37) in tRNA = N(6)-L-threonylcarbamoyladenosine(37) in tRNA + AMP + H(+). Functionally, component of the EKC/KEOPS complex that is required for the formation of a threonylcarbamoyl group on adenosine at position 37 (t(6)A37) in tRNAs that read codons beginning with adenine. The complex is probably involved in the transfer of the threonylcarbamoyl moiety of threonylcarbamoyl-AMP (TC-AMP) to the N6 group of A37. KAE1 likely plays a direct catalytic role in this reaction, but requires other protein(s) of the complex to fulfill this activity. The EKC/KEOPS complex also promotes both telomere uncapping and telomere elongation. The complex is required for efficient recruitment of transcriptional coactivators. This chain is tRNA N6-adenosine threonylcarbamoyltransferase, found in Eremothecium gossypii (strain ATCC 10895 / CBS 109.51 / FGSC 9923 / NRRL Y-1056) (Yeast).